The primary structure comprises 194 residues: ATP-dependent Clp protease proteolytic subunit (194 aa).

Catalysis depends on Ser98, which acts as the Nucleophile. The active site involves His123.

The protein belongs to the peptidase S14 family. In terms of assembly, fourteen ClpP subunits assemble into 2 heptameric rings which stack back to back to give a disk-like structure with a central cavity, resembling the structure of eukaryotic proteasomes.

It localises to the cytoplasm. The enzyme catalyses Hydrolysis of proteins to small peptides in the presence of ATP and magnesium. alpha-casein is the usual test substrate. In the absence of ATP, only oligopeptides shorter than five residues are hydrolyzed (such as succinyl-Leu-Tyr-|-NHMec, and Leu-Tyr-Leu-|-Tyr-Trp, in which cleavage of the -Tyr-|-Leu- and -Tyr-|-Trp bonds also occurs).. Cleaves peptides in various proteins in a process that requires ATP hydrolysis. Has a chymotrypsin-like activity. Plays a major role in the degradation of misfolded proteins. This is ATP-dependent Clp protease proteolytic subunit from Wigglesworthia glossinidia brevipalpis.